Reading from the N-terminus, the 292-residue chain is 1D-myo-inositol 2-acetamido-2-deoxy-alpha-D-glucopyranoside deacetylase (292 aa).

Zn(2+) contacts are provided by histidine 12, aspartate 15, and histidine 147.

Belongs to the MshB deacetylase family. The cofactor is Zn(2+).

It catalyses the reaction 1D-myo-inositol 2-acetamido-2-deoxy-alpha-D-glucopyranoside + H2O = 1D-myo-inositol 2-amino-2-deoxy-alpha-D-glucopyranoside + acetate. Functionally, catalyzes the deacetylation of 1D-myo-inositol 2-acetamido-2-deoxy-alpha-D-glucopyranoside (GlcNAc-Ins) in the mycothiol biosynthesis pathway. The protein is 1D-myo-inositol 2-acetamido-2-deoxy-alpha-D-glucopyranoside deacetylase of Rhodococcus jostii (strain RHA1).